The chain runs to 514 residues: 3-octaprenyl-4-hydroxybenzoate carboxy-lyase (514 aa).

N177 provides a ligand contact to Mn(2+). Prenylated FMN contacts are provided by residues 180–182 (IYR), 194–196 (RWL), and 199–200 (RG). Residue E243 coordinates Mn(2+). D314 (proton donor) is an active-site residue.

Belongs to the UbiD family. In terms of assembly, homohexamer. Prenylated FMN serves as cofactor. It depends on Mn(2+) as a cofactor.

It is found in the cell membrane. It catalyses the reaction a 4-hydroxy-3-(all-trans-polyprenyl)benzoate + H(+) = a 2-(all-trans-polyprenyl)phenol + CO2. The protein operates within cofactor biosynthesis; ubiquinone biosynthesis. Its function is as follows. Catalyzes the decarboxylation of 3-octaprenyl-4-hydroxy benzoate to 2-octaprenylphenol, an intermediate step in ubiquinone biosynthesis. This Bordetella bronchiseptica (strain ATCC BAA-588 / NCTC 13252 / RB50) (Alcaligenes bronchisepticus) protein is 3-octaprenyl-4-hydroxybenzoate carboxy-lyase.